The primary structure comprises 931 residues: Protocadherin gamma-A4 (931 aa).

Residues 1–28 (MAAPPARPDHTRLLHICLLLGVLVEIRA) form the signal peptide. 6 consecutive Cadherin domains span residues 29-133 (EQIR…PPSF), 134-242 (GTEQ…APVF), 243-347 (TQPE…APEV), 348-452 (TVTS…PPTF), 453-567 (PHAS…YPTF), and 570-682 (DDST…KPSA). Over 29–692 (EQIRYSVFEE…DPDDSGLTLY (664 aa)) the chain is Extracellular. N-linked (GlcNAc...) asparagine glycosylation is found at N419 and N545. A helical transmembrane segment spans residues 693-713 (LVVSVAAVSCVFLAFVTVLLA). Residues 714–931 (LKLRRWHKSR…KKKSGKKEKK (218 aa)) lie on the Cytoplasmic side of the membrane. 2 disordered regions span residues 801 to 840 (KGDP…WPNN) and 901 to 931 (ATLT…KEKK). A compositionally biased stretch (polar residues) spans 805–840 (NLQQAPPNTDWRFSQAQRPGTSGSQNGDDTGTWPNN). Positions 921 to 931 (NKKKSGKKEKK) are enriched in basic residues.

The protein localises to the cell membrane. In terms of biological role, potential calcium-dependent cell-adhesion protein. May be involved in the establishment and maintenance of specific neuronal connections in the brain. The protein is Protocadherin gamma-A4 (PCDHGA4) of Pan troglodytes (Chimpanzee).